The primary structure comprises 83 residues: Small ribosomal subunit protein uS17c (83 aa).

Belongs to the universal ribosomal protein uS17 family. Part of the 30S ribosomal subunit.

It is found in the plastid. The protein resides in the chloroplast. Its function is as follows. One of the primary rRNA binding proteins, it binds specifically to the 5'-end of 16S ribosomal RNA. The polypeptide is Small ribosomal subunit protein uS17c (rps17) (Pyropia yezoensis (Susabi-nori)).